The chain runs to 636 residues: Rust resistance kinase Lr10 (636 aa).

An N-terminal signal peptide occupies residues 1-24 (MSKLLVIALLLLPLINHGIYLATA). Residues 25–276 (WDDQDFFKYC…MPDPHGSHIK (252 aa)) lie on the Extracellular side of the membrane. N-linked (GlcNAc...) asparagine glycans are attached at residues asparagine 56, asparagine 177, and asparagine 222. A helical transmembrane segment spans residues 277 to 297 (VIAATSSVAAFVALLLTVATV). Residues 298-636 (LYLSLKTRYN…FVSSENELMS (339 aa)) are Cytoplasmic-facing. One can recognise a Protein kinase domain in the interval 339 to 628 (RRFKEKVGQG…SLQMPPKPFV (290 aa)). Residues 345 to 353 (VGQGGFGSV) and lysine 367 contribute to the ATP site. Aspartate 466 acts as the Proton acceptor in catalysis.

Belongs to the protein kinase superfamily. Ser/Thr protein kinase family. Specifically expressed in the aerial parts of the plant.

The protein localises to the cell membrane. The catalysed reaction is L-seryl-[protein] + ATP = O-phospho-L-seryl-[protein] + ADP + H(+). The enzyme catalyses L-threonyl-[protein] + ATP = O-phospho-L-threonyl-[protein] + ADP + H(+). This Triticum aestivum (Wheat) protein is Rust resistance kinase Lr10.